The sequence spans 210 residues: Histone H1A (210 aa).

Disordered regions lie at residues 1–49 (MAEA…VSEQ) and 101–210 (KGSG…PKKK). Composition is skewed to low complexity over residues 26–45 (KKAAAARGAAKSKKPSSGPS) and 129–142 (PLAAEAKKPAAAAK). The region spanning 42 to 113 (SGPSVSEQIV…GASGSFKLNK (72 aa)) is the H15 domain. Basic residues-rich tracts occupy residues 143 to 153 (KTAKSPKKPKK) and 160 to 180 (SPKKLKKPAKAAKSPAKKTAV). Low complexity predominate over residues 181–192 (KPKVAAKSPAKA). A compositionally biased stretch (basic residues) spans 193–210 (KAAKPKVAKAKKAAPKKK).

The protein belongs to the histone H1/H5 family.

It localises to the nucleus. The protein resides in the chromosome. Its function is as follows. Histones H1 are necessary for the condensation of nucleosome chains into higher-order structures. This is Histone H1A from Xenopus laevis (African clawed frog).